Here is a 1084-residue protein sequence, read N- to C-terminus: Cellulose synthase A catalytic subunit 6 [UDP-forming] (1084 aa).

At methionine 1 the chain carries N-acetylmethionine. The Cytoplasmic segment spans residues methionine 1–methionine 277. The Zn(2+) site is built by cysteine 39, cysteine 42, cysteine 58, cysteine 61, cysteine 66, cysteine 69, cysteine 81, and cysteine 84. The segment at cysteine 39 to lysine 85 adopts an RING-type; degenerate zinc-finger fold. A helical transmembrane segment spans residues leucine 278–valine 298. The Extracellular portion of the chain corresponds to lysine 299–aspartate 300. Residues alanine 301–leucine 321 traverse the membrane as a helical segment. The Cytoplasmic segment spans residues aspartate 322 to serine 868. UDP-alpha-D-glucose is bound by residues serine 360, lysine 366, glutamate 367, and aspartate 396. Aspartate 396 is a catalytic residue. A coiled-coil region spans residues valine 450–lysine 476. Lysine 537 is a binding site for UDP-alpha-D-glucose. 2 residues coordinate Mn(2+): lysine 538 and aspartate 562. Positions arginine 675–glutamate 703 form a coiled coil. Residue aspartate 785 is part of the active site. The chain crosses the membrane as a helical span at residues leucine 869 to valine 889. The Extracellular segment spans residues proline 890–asparagine 894. Residues tyrosine 895–methionine 915 form a helical membrane-spanning segment. At glutamine 916 to glutamine 930 the chain is on the cytoplasmic side. A helical membrane pass occupies residues phenylalanine 931–valine 951. Topologically, residues leucine 952–threonine 980 are extracellular. An N-linked (GlcNAc...) asparagine glycan is attached at asparagine 958. A helical membrane pass occupies residues serine 981–valine 1001. Topologically, residues serine 1002–tryptophan 1012 are cytoplasmic. A helical transmembrane segment spans residues glycine 1013–leucine 1033. The Extracellular segment spans residues lysine 1034–arginine 1042. Residues methionine 1043–valine 1063 form a helical membrane-spanning segment. Residues arginine 1064–leucine 1084 lie on the Cytoplasmic side of the membrane.

It belongs to the glycosyltransferase 2 family. Plant cellulose synthase subfamily. In terms of assembly, interacts with CESA1 and CESA3. Interacts with STL1 and STL2, but not with GOT1. Binds to CSI1 and CSI3. Interacts with PAT24/TIP1. It depends on Zn(2+) as a cofactor. Mn(2+) is required as a cofactor. Post-translationally, S-acylated. Expressed in germinating seeds, seedlings, roots, stems, leaves and flowers. Not present in mature flowers.

It localises to the cell membrane. It catalyses the reaction [(1-&gt;4)-beta-D-glucosyl](n) + UDP-alpha-D-glucose = [(1-&gt;4)-beta-D-glucosyl](n+1) + UDP + H(+). It functions in the pathway glycan metabolism; plant cellulose biosynthesis. Its function is as follows. Catalytic subunit of cellulose synthase terminal complexes ('rosettes'), required for beta-1,4-glucan microfibril crystallization, a major mechanism of the cell wall formation. Involved in the primary cell wall formation. The presence of each protein CESA1 and CESA6 is critical for cell expansion. The hypocotyl elongation is based on a CESA6-dependent cell elongation in dark and a CESA6-independent cell elongation in light. The transition between these two mechanisms requires photosynthesis and PHYB, but not CRY1. The CESA6-dependent cell elongation seems to be independent of gibberellic acid, auxin and ethylene. May be involved in sensitivity to isoxaben. Associates with and moves along cortical microtubules for the process of cellulose deposition. The sequence is that of Cellulose synthase A catalytic subunit 6 [UDP-forming] from Arabidopsis thaliana (Mouse-ear cress).